Consider the following 75-residue polypeptide: MYB-like transcription factor ETC3 (75 aa).

The disordered stretch occupies residues methionine 1–serine 20. Positions serine 34–tryptophan 71 constitute a Myb-like domain.

Expressed in leaf epidermal cells, stomate guard cells in leaves, cotyledons and hypocotyls, inflorescences, developing seeds and siliques.

It is found in the nucleus. In terms of biological role, MYB-type transcription factor involved in epidermal cell fate specification. Acts as a negative regulator of trichome development, including endoreplication, by mediating lateral inhibition. Promotes the formation of hair developing cells in H position in root epidermis, probably by inhibiting non-hair cell formation. May have pleiotropic effects on flowering development and epidermal cell size through the regulation of endoreduplication. This Arabidopsis thaliana (Mouse-ear cress) protein is MYB-like transcription factor ETC3 (ETC3).